Here is a 177-residue protein sequence, read N- to C-terminus: Peptidyl-tRNA hydrolase (177 aa).

Tyrosine 14 lines the tRNA pocket. Residue histidine 19 is the Proton acceptor of the active site. Residues phenylalanine 64, asparagine 66, and asparagine 112 each contribute to the tRNA site.

It belongs to the PTH family. As to quaternary structure, monomer.

The protein localises to the cytoplasm. It carries out the reaction an N-acyl-L-alpha-aminoacyl-tRNA + H2O = an N-acyl-L-amino acid + a tRNA + H(+). Its function is as follows. Hydrolyzes ribosome-free peptidyl-tRNAs (with 1 or more amino acids incorporated), which drop off the ribosome during protein synthesis, or as a result of ribosome stalling. In terms of biological role, catalyzes the release of premature peptidyl moieties from peptidyl-tRNA molecules trapped in stalled 50S ribosomal subunits, and thus maintains levels of free tRNAs and 50S ribosomes. In Latilactobacillus sakei (Lactobacillus sakei), this protein is Peptidyl-tRNA hydrolase.